A 306-amino-acid polypeptide reads, in one-letter code: Curved DNA-binding protein (306 aa).

The region spanning 5–69 (DYYAIMGVKP…QRRAEYDQMW (65 aa)) is the J domain.

It is found in the cytoplasm. The protein localises to the nucleoid. Its function is as follows. DNA-binding protein that preferentially recognizes a curved DNA sequence. It is probably a functional analog of DnaJ; displays overlapping activities with DnaJ, but functions under different conditions, probably acting as a molecular chaperone in an adaptive response to environmental stresses other than heat shock. Lacks autonomous chaperone activity; binds native substrates and targets them for recognition by DnaK. Its activity is inhibited by the binding of CbpM. This chain is Curved DNA-binding protein, found in Escherichia coli (strain 55989 / EAEC).